The chain runs to 276 residues: Dermonecrotic toxin LdSicTox-alphaIB2 (276 aa).

His-5 is an active-site residue. The Mg(2+) site is built by Glu-25 and Asp-27. His-41 acts as the Nucleophile in catalysis. 2 disulfides stabilise this stretch: Cys-45/Cys-51 and Cys-47/Cys-190. Position 85 (Asp-85) interacts with Mg(2+). A glycan (N-linked (GlcNAc...) asparagine) is linked at Asn-253.

This sequence belongs to the arthropod phospholipase D family. Class II subfamily. Mg(2+) serves as cofactor. Expressed by the venom gland.

The protein resides in the secreted. It carries out the reaction an N-(acyl)-sphingosylphosphocholine = an N-(acyl)-sphingosyl-1,3-cyclic phosphate + choline. The catalysed reaction is an N-(acyl)-sphingosylphosphoethanolamine = an N-(acyl)-sphingosyl-1,3-cyclic phosphate + ethanolamine. The enzyme catalyses a 1-acyl-sn-glycero-3-phosphocholine = a 1-acyl-sn-glycero-2,3-cyclic phosphate + choline. It catalyses the reaction a 1-acyl-sn-glycero-3-phosphoethanolamine = a 1-acyl-sn-glycero-2,3-cyclic phosphate + ethanolamine. Functionally, dermonecrotic toxins cleave the phosphodiester linkage between the phosphate and headgroup of certain phospholipids (sphingolipid and lysolipid substrates), forming an alcohol (often choline) and a cyclic phosphate. This toxin acts on sphingomyelin (SM). It may also act on ceramide phosphoethanolamine (CPE), lysophosphatidylcholine (LPC) and lysophosphatidylethanolamine (LPE), but not on lysophosphatidylserine (LPS), and lysophosphatidylglycerol (LPG). It acts by transphosphatidylation, releasing exclusively cyclic phosphate products as second products. Induces dermonecrosis, hemolysis, increased vascular permeability, edema, inflammatory response, and platelet aggregation. In Loxosceles deserta (Desert recluse spider), this protein is Dermonecrotic toxin LdSicTox-alphaIB2.